We begin with the raw amino-acid sequence, 211 residues long: MQTVNQTATKVLTETVTAIPHRRVGILGGTFNPPHLGHLIMAQQVGDQLGLDEVRFMPDAQPPHVDEKKTIAVEDRANMVQEAIVDNPLFRLETAEIERGGKSYTYETMKFLKAKHPDTQYYFIIGGDMVDYLHTWYHIDELVKLVTFVGIKRTGYPTTSQYPVIWVDAPLIDISSTQIRQKISHGHSVRYLVPEAVAAYIKEHHLYEQND.

This sequence belongs to the NadD family.

It catalyses the reaction nicotinate beta-D-ribonucleotide + ATP + H(+) = deamido-NAD(+) + diphosphate. It functions in the pathway cofactor biosynthesis; NAD(+) biosynthesis; deamido-NAD(+) from nicotinate D-ribonucleotide: step 1/1. Its function is as follows. Catalyzes the reversible adenylation of nicotinate mononucleotide (NaMN) to nicotinic acid adenine dinucleotide (NaAD). This chain is Probable nicotinate-nucleotide adenylyltransferase, found in Lactiplantibacillus plantarum (strain ATCC BAA-793 / NCIMB 8826 / WCFS1) (Lactobacillus plantarum).